Reading from the N-terminus, the 397-residue chain is Argininosuccinate synthase (397 aa).

8-16 provides a ligand contact to ATP; the sequence is AYSGGLDTS. 2 residues coordinate L-citrulline: Tyr-86 and Ser-91. ATP is bound at residue Gly-116. L-aspartate contacts are provided by Thr-118, Asn-122, and Asp-123. Asn-122 serves as a coordination point for L-citrulline. The L-citrulline site is built by Arg-126, Ser-175, Ser-184, Glu-260, and Tyr-272.

It belongs to the argininosuccinate synthase family. Type 1 subfamily. As to quaternary structure, homotetramer.

It localises to the cytoplasm. The enzyme catalyses L-citrulline + L-aspartate + ATP = 2-(N(omega)-L-arginino)succinate + AMP + diphosphate + H(+). It participates in amino-acid biosynthesis; L-arginine biosynthesis; L-arginine from L-ornithine and carbamoyl phosphate: step 2/3. This is Argininosuccinate synthase from Clostridium botulinum (strain ATCC 19397 / Type A).